The primary structure comprises 249 residues: Probable phosphoglycerate mutase (249 aa).

Residues 9-16 (RHGESTWN), 22-23 (TG), R61, 88-91 (ERMY), K99, 115-116 (RR), and 184-185 (GN) contribute to the substrate site. Catalysis depends on H10, which acts as the Tele-phosphohistidine intermediate. E88 functions as the Proton donor/acceptor in the catalytic mechanism.

The protein belongs to the phosphoglycerate mutase family. BPG-dependent PGAM subfamily. In terms of assembly, homodimer.

The enzyme catalyses (2R)-2-phosphoglycerate = (2R)-3-phosphoglycerate. It carries out the reaction (2R)-3-phospho-glyceroyl phosphate = (2R)-2,3-bisphosphoglycerate + H(+). Functionally, catalyzes the interconversion of 2-phosphoglycerate and 3-phosphoglycerate. The sequence is that of Probable phosphoglycerate mutase (gpmA) from Dictyostelium discoideum (Social amoeba).